Consider the following 545-residue polypeptide: CTP synthase (545 aa).

The segment at 1–266 (MTTNYIFVTG…DDYICKRFSL (266 aa)) is amidoligase domain. Residue Ser-14 coordinates CTP. Ser-14 contacts UTP. Residues 15 to 20 (SLGKGI) and Asp-72 each bind ATP. Residues Asp-72 and Glu-140 each coordinate Mg(2+). CTP is bound by residues 147 to 149 (DIE), 187 to 192 (KTKPTQ), and Lys-223. UTP contacts are provided by residues 187 to 192 (KTKPTQ) and Lys-223. 239–241 (KDV) serves as a coordination point for ATP. Residues 291 to 542 (NIGMVGKYVE…VKAASEYQKR (252 aa)) form the Glutamine amidotransferase type-1 domain. Gly-352 is an L-glutamine binding site. Catalysis depends on Cys-379, which acts as the Nucleophile; for glutamine hydrolysis. Residues 380–383 (LGMQ), Glu-403, and Arg-470 contribute to the L-glutamine site. Residues His-515 and Glu-517 contribute to the active site.

Belongs to the CTP synthase family. Homotetramer.

The catalysed reaction is UTP + L-glutamine + ATP + H2O = CTP + L-glutamate + ADP + phosphate + 2 H(+). The enzyme catalyses L-glutamine + H2O = L-glutamate + NH4(+). It catalyses the reaction UTP + NH4(+) + ATP = CTP + ADP + phosphate + 2 H(+). The protein operates within pyrimidine metabolism; CTP biosynthesis via de novo pathway; CTP from UDP: step 2/2. Its activity is regulated as follows. Allosterically activated by GTP, when glutamine is the substrate; GTP has no effect on the reaction when ammonia is the substrate. The allosteric effector GTP functions by stabilizing the protein conformation that binds the tetrahedral intermediate(s) formed during glutamine hydrolysis. Inhibited by the product CTP, via allosteric rather than competitive inhibition. Catalyzes the ATP-dependent amination of UTP to CTP with either L-glutamine or ammonia as the source of nitrogen. Regulates intracellular CTP levels through interactions with the four ribonucleotide triphosphates. The protein is CTP synthase of Erwinia tasmaniensis (strain DSM 17950 / CFBP 7177 / CIP 109463 / NCPPB 4357 / Et1/99).